The following is a 176-amino-acid chain: uncharacterized protein (176 aa).

The signal sequence occupies residues 1 to 20 (MIKKISIILITLFIIQLTKS). Residues 26 to 46 (NNNNNNNNNNNNNNNNNNNNN) form a disordered region. Residue N120 is glycosylated (N-linked (GlcNAc...) asparagine).

This sequence belongs to the Dictyostelium gerABC family.

It localises to the secreted. This is an uncharacterized protein from Dictyostelium discoideum (Social amoeba).